The chain runs to 112 residues: Putative pterin-4-alpha-carbinolamine dehydratase (112 aa).

This sequence belongs to the pterin-4-alpha-carbinolamine dehydratase family.

The enzyme catalyses (4aS,6R)-4a-hydroxy-L-erythro-5,6,7,8-tetrahydrobiopterin = (6R)-L-erythro-6,7-dihydrobiopterin + H2O. In Hahella chejuensis (strain KCTC 2396), this protein is Putative pterin-4-alpha-carbinolamine dehydratase.